We begin with the raw amino-acid sequence, 426 residues long: Enolase (426 aa).

Gln163 is a (2R)-2-phosphoglycerate binding site. Glu205 (proton donor) is an active-site residue. Residues Asp242, Glu283, and Asp310 each coordinate Mg(2+). (2R)-2-phosphoglycerate contacts are provided by Lys335, Arg364, Ser365, and Lys386. Residue Lys335 is the Proton acceptor of the active site.

It belongs to the enolase family. Mg(2+) serves as cofactor.

The protein resides in the cytoplasm. It is found in the secreted. The protein localises to the cell surface. The enzyme catalyses (2R)-2-phosphoglycerate = phosphoenolpyruvate + H2O. It participates in carbohydrate degradation; glycolysis; pyruvate from D-glyceraldehyde 3-phosphate: step 4/5. In terms of biological role, catalyzes the reversible conversion of 2-phosphoglycerate (2-PG) into phosphoenolpyruvate (PEP). It is essential for the degradation of carbohydrates via glycolysis. This chain is Enolase, found in Leifsonia xyli subsp. xyli (strain CTCB07).